The following is a 428-amino-acid chain: Glutamyl-tRNA reductase (428 aa).

Residues T49 to R52, S109, E114 to Q116, and Q120 each bind substrate. C50 functions as the Nucleophile in the catalytic mechanism. G189–S194 contributes to the NADP(+) binding site.

It belongs to the glutamyl-tRNA reductase family. As to quaternary structure, homodimer.

The enzyme catalyses (S)-4-amino-5-oxopentanoate + tRNA(Glu) + NADP(+) = L-glutamyl-tRNA(Glu) + NADPH + H(+). Its pathway is porphyrin-containing compound metabolism; protoporphyrin-IX biosynthesis; 5-aminolevulinate from L-glutamyl-tRNA(Glu): step 1/2. It participates in porphyrin-containing compound metabolism; chlorophyll biosynthesis. In terms of biological role, catalyzes the NADPH-dependent reduction of glutamyl-tRNA(Glu) to glutamate 1-semialdehyde (GSA). The protein is Glutamyl-tRNA reductase of Trichormus variabilis (strain ATCC 29413 / PCC 7937) (Anabaena variabilis).